Here is a 623-residue protein sequence, read N- to C-terminus: Pyranose 2-oxidase (623 aa).

The signal sequence occupies residues 1–27 (MSTSSSDPFFNFTKSSFRSAAAQKASA). The propeptide occupies 28–38 (TSLPPLPGPDK). Histidine 167 is subject to Tele-8alpha-FAD histidine. Positions 448 and 450 each coordinate substrate. The Proton acceptor role is filled by histidine 548. Asparagine 593 is an active-site residue.

It belongs to the GMC oxidoreductase family. As to quaternary structure, homotetramer. Requires FAD as cofactor. Not glycosylated.

The protein localises to the periplasm. The enzyme catalyses D-glucose + O2 = 2-dehydro-D-glucose + H2O2. Catalyzes the oxidation of various aldopyranoses and disaccharides on carbon-2 to the corresponding 2-keto sugars concomitant with the reduction of O(2) to H(2)O(2). Plays an important role in lignin degradation of wood rot fungi by supplying the essential cosubstrate H(2)O(2) for the ligninolytic peroxidases, lignin peroxidase and manganese-dependent peroxidase. The preferred substrate is D-glucose which is converted to 2-dehydro-D-glucose. Also acts on D-xylose, together with D-glucose the major sugars derived from wood, on L-sorbose, D-galactose and 1,5-anhydroglucitol, a diagnostic marker of diabetes mellitus. The chain is Pyranose 2-oxidase (P2OX) from Trametes versicolor (White-rot fungus).